Here is a 310-residue protein sequence, read N- to C-terminus: Porphobilinogen deaminase (310 aa).

Cys242 carries the post-translational modification S-(dipyrrolylmethanemethyl)cysteine.

The protein belongs to the HMBS family. Monomer. Dipyrromethane serves as cofactor.

The catalysed reaction is 4 porphobilinogen + H2O = hydroxymethylbilane + 4 NH4(+). Its pathway is porphyrin-containing compound metabolism; protoporphyrin-IX biosynthesis; coproporphyrinogen-III from 5-aminolevulinate: step 2/4. Its function is as follows. Tetrapolymerization of the monopyrrole PBG into the hydroxymethylbilane pre-uroporphyrinogen in several discrete steps. In Shewanella baltica (strain OS195), this protein is Porphobilinogen deaminase.